A 92-amino-acid chain; its full sequence is Precursor of CEP12 (92 aa).

An N-terminal signal peptide occupies residues 1–30 (MVNRDNSIVALSFFMLFLLVLHLHFETTTA). Positions 31 to 70 (ARKPVRVFGPPSSIEWSPPSPPKDDFEWFEINIYKNIEQT) are excised as a propeptide. The disordered stretch occupies residues 70-92 (TAFRPTGQGPSQGIGHKDPPGAP). Hydroxyproline is present on residues P74 and P79. Residues 86 to 92 (KDPPGAP) constitute a propeptide that is removed on maturation.

The protein belongs to the C-terminally encoded plant signaling peptide (CEP) family. As to quaternary structure, interacts with CEP receptors (e.g. CEPR1 and CEPR2). In terms of processing, the mature small signaling peptide is generated by proteolytic processing of the longer precursor.

The protein resides in the secreted. It is found in the extracellular space. Its subcellular location is the apoplast. Its function is as follows. Extracellular signaling peptide that may regulate primary root growth rate and systemic nitrogen (N)-demand signaling. In Arabidopsis thaliana (Mouse-ear cress), this protein is Precursor of CEP12.